Here is a 191-residue protein sequence, read N- to C-terminus: Adenylate kinase (191 aa).

ATP is bound at residue 12-17 (GSGKTT). The segment at 34 to 63 (STGDLLRAESAKKTERGLLIEKFTSQGELV) is NMP. AMP is bound by residues T35, R40, 61–63 (ELV), 88–91 (GYPR), and Q95. Residues 130–136 (GRSRGAD) are LID. R131 provides a ligand contact to ATP. R133 and R145 together coordinate AMP. R173 is an ATP binding site.

Belongs to the adenylate kinase family. Monomer.

It localises to the cytoplasm. The enzyme catalyses AMP + ATP = 2 ADP. The protein operates within purine metabolism; AMP biosynthesis via salvage pathway; AMP from ADP: step 1/1. In terms of biological role, catalyzes the reversible transfer of the terminal phosphate group between ATP and AMP. Plays an important role in cellular energy homeostasis and in adenine nucleotide metabolism. In Helicobacter pylori (strain G27), this protein is Adenylate kinase.